We begin with the raw amino-acid sequence, 484 residues long: Allantoinase, mitochondrial (484 aa).

Positions 76, 78, 163, 199, 251, and 324 each coordinate Zn(2+). At Lys163 the chain carries N6-carboxylysine.

This sequence belongs to the metallo-dependent hydrolases superfamily. Allantoinase family. In terms of assembly, homotetramer. It depends on Zn(2+) as a cofactor. In terms of processing, carboxylation allows a single lysine to coordinate two zinc ions. As to expression, liver and kidney.

It is found in the mitochondrion. It catalyses the reaction (S)-allantoin + H2O = allantoate + H(+). It participates in nitrogen metabolism; (S)-allantoin degradation; allantoate from (S)-allantoin: step 1/1. The sequence is that of Allantoinase, mitochondrial (ALN) from Aquarana catesbeiana (American bullfrog).